The chain runs to 461 residues: Photosystem II CP43 reaction center protein (461 aa).

Positions 1–2 are excised as a propeptide; it reads ME. Threonine 3 is subject to N-acetylthreonine. Threonine 3 bears the Phosphothreonine mark. 5 helical membrane-spanning segments follow: residues 57–81, 122–143, 166–188, 243–263, and 279–300; these read LFEV…PHLA, LLGP…KDRN, KALY…RKIT, KPFA…LSYS, and WFNN…ASQA. Glutamate 355 provides a ligand contact to [CaMn4O5] cluster. A helical transmembrane segment spans residues 435 to 459; the sequence is RARAAAAGFEKGIDRDFEPVLSMTP.

The protein belongs to the PsbB/PsbC family. PsbC subfamily. In terms of assembly, PSII is composed of 1 copy each of membrane proteins PsbA, PsbB, PsbC, PsbD, PsbE, PsbF, PsbH, PsbI, PsbJ, PsbK, PsbL, PsbM, PsbT, PsbX, PsbY, PsbZ, Psb30/Ycf12, at least 3 peripheral proteins of the oxygen-evolving complex and a large number of cofactors. It forms dimeric complexes. Binds multiple chlorophylls and provides some of the ligands for the Ca-4Mn-5O cluster of the oxygen-evolving complex. It may also provide a ligand for a Cl- that is required for oxygen evolution. PSII binds additional chlorophylls, carotenoids and specific lipids. serves as cofactor.

It localises to the plastid. The protein resides in the chloroplast thylakoid membrane. In terms of biological role, one of the components of the core complex of photosystem II (PSII). It binds chlorophyll and helps catalyze the primary light-induced photochemical processes of PSII. PSII is a light-driven water:plastoquinone oxidoreductase, using light energy to abstract electrons from H(2)O, generating O(2) and a proton gradient subsequently used for ATP formation. In Nicotiana sylvestris (Wood tobacco), this protein is Photosystem II CP43 reaction center protein.